The chain runs to 280 residues: 4-deoxy-L-threo-5-hexosulose-uronate ketol-isomerase (280 aa).

4 residues coordinate Zn(2+): His-198, His-200, Glu-205, and His-247.

The protein belongs to the KduI family. Requires Zn(2+) as cofactor.

The enzyme catalyses 5-dehydro-4-deoxy-D-glucuronate = 3-deoxy-D-glycero-2,5-hexodiulosonate. The protein operates within glycan metabolism; pectin degradation; 2-dehydro-3-deoxy-D-gluconate from pectin: step 4/5. Its function is as follows. Catalyzes the isomerization of 5-dehydro-4-deoxy-D-glucuronate to 3-deoxy-D-glycero-2,5-hexodiulosonate. This Lachnospira eligens (strain ATCC 27750 / DSM 3376 / VPI C15-48 / C15-B4) (Eubacterium eligens) protein is 4-deoxy-L-threo-5-hexosulose-uronate ketol-isomerase.